The primary structure comprises 87 residues: U3-theraphotoxin-Hhn1a 7 (87 aa).

The N-terminal stretch at 1–24 (MVNMKASMFLTFAGLVLLFVVSYA) is a signal peptide. The propeptide occupies 25–52 (SESEEKEFPKEMLSSIFAVDNDFKQEER). Intrachain disulfides connect cysteine 54–cysteine 67, cysteine 61–cysteine 72, and cysteine 66–cysteine 79.

The protein belongs to the neurotoxin 10 (Hwtx-1) family. 51 (Hntx-8) subfamily. Hntx-8 sub-subfamily. Expressed by the venom gland.

Its subcellular location is the secreted. Ion channel inhibitor. In Cyriopagopus hainanus (Chinese bird spider), this protein is U3-theraphotoxin-Hhn1a 7.